Reading from the N-terminus, the 313-residue chain is Porphobilinogen deaminase (313 aa).

Residue Cys-242 is modified to S-(dipyrrolylmethanemethyl)cysteine.

It belongs to the HMBS family. Monomer. Requires dipyrromethane as cofactor.

It carries out the reaction 4 porphobilinogen + H2O = hydroxymethylbilane + 4 NH4(+). It functions in the pathway porphyrin-containing compound metabolism; protoporphyrin-IX biosynthesis; coproporphyrinogen-III from 5-aminolevulinate: step 2/4. Functionally, tetrapolymerization of the monopyrrole PBG into the hydroxymethylbilane pre-uroporphyrinogen in several discrete steps. This chain is Porphobilinogen deaminase, found in Pectobacterium atrosepticum (strain SCRI 1043 / ATCC BAA-672) (Erwinia carotovora subsp. atroseptica).